A 459-amino-acid chain; its full sequence is MTLDLNPNDMSHVVAADRAHVWHHLSQHKQYETIDPRVFVEGKGMRLWDATGREFLDAVSGGVWTVNVGYGRESIADAIRDQLVKLNYYAGAAGTVPGAIFAQKLIEKMPGMTRVYYSNSGSEANEKVYKMVRQIAARHHGGKKWKILYRDRDYHGTTIATLATSGQDQRAIAYGPFPDGFVRVPHCLEYRKQWDVENYGERAADAIEEVILREGPDTVGAIVLEPVTAGGGVITPPEGYWQRVQEICRKYDILLHIDEVVCGLGRTGTWFGYQQYGIEPDFVTMAKGVASGYAAISCTVTTERVFEMFKDAPEDGMSFFRDISTFGGCTSGPVAAIENMRIIEDEGLLDNTVAMGERTLANLNALMEKHKVIGDVRGKGLFCGAELVADRASKEPMDEKKVQAVVADCLAQGVIIGATNRSLPGFNNTLCLSPALIATADNIDRITDAIDNALTKVFA.

N6-(pyridoxal phosphate)lysine is present on Lys287.

It belongs to the class-III pyridoxal-phosphate-dependent aminotransferase family. It depends on pyridoxal 5'-phosphate as a cofactor.

The catalysed reaction is hypotaurine + pyruvate = 2-sulfinoacetaldehyde + L-alanine. The enzyme catalyses taurine + pyruvate = sulfoacetaldehyde + L-alanine. Its pathway is organosulfur degradation. Functionally, converts hypotaurine to alanine and sulfinoacetaldehyde, which desulfinates spontaneously to acetaldehyde and sulfite. Can also catalyze the degradation of taurine into alanine and sulfoacetaldehyde, which is stable. Has 2-fold higher aminotransferase activity with hypotaurine as the substrate. The chain is Hypotaurine/taurine--pyruvate aminotransferase from Paracoccus denitrificans (strain Pd 1222).